The primary structure comprises 951 residues: Protein inturned (951 aa).

3 disordered regions span residues 1-32 (MEHSRGDSVEAGEEEEGRGGWDSRSAGTFSSS), 189-208 (SSRNSKRSERQGRQESNQRL), and 687-765 (TPKR…GGSG). The PDZ domain occupies 187 to 269 (HQSSRNSKRS…PMQLKLTFET (83 aa)). A compositionally biased stretch (low complexity) spans 715 to 726 (PTRSSGGSDSGT). Positions 743-752 (MARKFGRRES) are enriched in basic and acidic residues. Over residues 754-765 (GSGGSDGSGGSG) the composition is skewed to gly residues.

This sequence belongs to the inturned family. Interacts with fuz and wdpcp; fuz, intu and wdpcp probably form the core CPLANE (ciliogenesis and planar polarity effectors) complex. Expressed in the neural plate during neural tube closure with subsequent strong expression in the ventral neural tube and in facial mesenchyme.

It is found in the cell surface. The protein resides in the cell membrane. It localises to the cytoplasm. Its subcellular location is the cytoskeleton. The protein localises to the cilium basal body. Functionally, plays a role in the definition of cell polarity via the planar cell polarity (PCP) cascade. Required for ciliogenesis by controlling the organization of the apical actin cytoskeleton and the positioning of the basal bodies at the apical cell surface, which in turn is essential for the normal orientation of elongating ciliary microtubules. Proposed to function as core component of a functional module called CPLANE (ciliogenesis and planar polarity effectors) involved in recruitment of peripheral IFT-A proteins to basal bodies. Controls the localization of both rhoa and disheveled in multi-ciliated cells. Has an indirect effect on hedgehog signaling. The sequence is that of Protein inturned from Xenopus laevis (African clawed frog).